Consider the following 309-residue polypeptide: Tagatose-6-phosphate kinase (309 aa).

Belongs to the carbohydrate kinase PfkB family. LacC subfamily.

It carries out the reaction D-tagatofuranose 6-phosphate + ATP = D-tagatofuranose 1,6-bisphosphate + ADP + H(+). The protein operates within carbohydrate metabolism; D-tagatose 6-phosphate degradation; D-glyceraldehyde 3-phosphate and glycerone phosphate from D-tagatose 6-phosphate: step 1/2. This is Tagatose-6-phosphate kinase from Streptococcus sanguinis (strain SK36).